The sequence spans 336 residues: Glycerol-3-phosphate dehydrogenase [NAD(P)+] (336 aa).

Residues S16, Y17, H37, and K111 each contribute to the NADPH site. Sn-glycerol 3-phosphate is bound by residues K111, G140, and T142. A144 contributes to the NADPH binding site. The sn-glycerol 3-phosphate site is built by K196, D249, S259, R260, and N261. K196 serves as the catalytic Proton acceptor. R260 contributes to the NADPH binding site. V284 and E286 together coordinate NADPH.

Belongs to the NAD-dependent glycerol-3-phosphate dehydrogenase family.

Its subcellular location is the cytoplasm. The catalysed reaction is sn-glycerol 3-phosphate + NAD(+) = dihydroxyacetone phosphate + NADH + H(+). It catalyses the reaction sn-glycerol 3-phosphate + NADP(+) = dihydroxyacetone phosphate + NADPH + H(+). The protein operates within membrane lipid metabolism; glycerophospholipid metabolism. Catalyzes the reduction of the glycolytic intermediate dihydroxyacetone phosphate (DHAP) to sn-glycerol 3-phosphate (G3P), the key precursor for phospholipid synthesis. This is Glycerol-3-phosphate dehydrogenase [NAD(P)+] from Haemophilus ducreyi (strain 35000HP / ATCC 700724).